The primary structure comprises 684 residues: Frizzled-8 (684 aa).

An N-terminal signal peptide occupies residues 1–27; sequence MEWGYLLEVTSLLAALAVLQRSSGAAA. Topologically, residues 28 to 271 are extracellular; the sequence is ASAKELACQE…NPFFSQDERA (244 aa). The 122-residue stretch at 30-151 folds into the FZ domain; the sequence is AKELACQEIT…GNPDTLCMDY (122 aa). Disulfide bonds link Cys35–Cys96, Cys43–Cys89, Cys80–Cys118, Cys107–Cys148, and Cys111–Cys135. N-linked (GlcNAc...) asparagine glycosylation occurs at Asn49. Position 71 to 78 (71 to 78) interacts with hexadecanoate; the sequence is QFWPLVEI. The segment at 95 to 100 is wnt-binding; that stretch reads ICLEDY. The segment at 147 to 152 is wnt-binding; that stretch reads LCMDYN. Asn152 carries N-linked (GlcNAc...) asparagine glycosylation. The interval 155 to 222 is disordered; sequence DLTTAAPSPP…KARPPGGGAA (68 aa). Residues 161-175 are compositionally biased toward pro residues; the sequence is PSPPRRLPPPQPGEQ. Low complexity-rich tracts occupy residues 176 to 186 and 199 to 222; these read PPSGSGHSRPP and GSGD…GGAA. Residues 272–292 traverse the membrane as a helical segment; sequence FTVFWIGLWSVLCFVSTFATV. Residues 293–308 are Cytoplasmic-facing; that stretch reads STFLIDMERFKYPERP. A helical transmembrane segment spans residues 309 to 329; sequence IIFLSACYLFVSVGYLVRLVA. The Extracellular segment spans residues 330–393; sequence GHEKVACSGG…RYETTGPALC (64 aa). Residues 394-414 form a helical membrane-spanning segment; that stretch reads TVVFLLVYFFGMASSIWWVIL. Residues 415–436 are Cytoplasmic-facing; the sequence is SLTWFLAAGMKWGNEAIAGYSQ. Residues 437–457 form a helical membrane-spanning segment; the sequence is YFHLAAWLVPSVKSIAVLALS. The Extracellular segment spans residues 458 to 480; the sequence is SVDGDPVAGICYVGNQSLDNLRG. An N-linked (GlcNAc...) asparagine glycan is attached at Asn472. A helical transmembrane segment spans residues 481-501; the sequence is FVLAPLVIYLFIGTMFLLAGF. At 502–529 the chain is on the cytoplasmic side; that stretch reads VSLFRIRSVIKQQGGPTKTHKLEKLMIR. A helical membrane pass occupies residues 530–550; that stretch reads LGLFTVLYTVPAAVVVACLFY. The Extracellular portion of the chain corresponds to 551 to 581; the sequence is EQHNRPRWEATHNCPCLRDLQPDQARRPDYA. The helical transmembrane segment at 582–602 threads the bilayer; sequence VFMLKYFMCLVVGITSGVWVW. Residues 603–684 lie on the Cytoplasmic side of the membrane; it reads SGKTLESWRA…YPKQMPLSQV (82 aa). A Lys-Thr-X-X-X-Trp motif, mediates interaction with the PDZ domain of Dvl family members motif is present at residues 605–610; sequence KTLESW. The segment covering 630–654 has biased composition (gly residues); that stretch reads AGGSGPGGGGPGPGGGGGHGGGGGS. The interval 630 to 655 is disordered; sequence AGGSGPGGGGPGPGGGGGHGGGGGSL. Residues 682–684 carry the PDZ-binding motif; it reads SQV.

Belongs to the G-protein coupled receptor Fz/Smo family. Component of a Wnt-signaling complex that contains a WNT protein, a FZD protein and LRP5 or LRP6. Interacts directly with LRP5 or LRP6; the interaction is promoted by Wnt-binding and signaling and inhibited by DKK1. Interacts (via the PDZ-binding motif) with GPOC (via its PDZ domain). Interacts with RSPO1 and RSPO3. Interacts with glypican GPC3. Post-translationally, ubiquitinated by ZNRF3, leading to its degradation by the proteasome.

The protein localises to the membrane. It is found in the golgi apparatus. Its subcellular location is the cell membrane. Receptor for Wnt proteins. Component of the Wnt-Fzd-LRP5-LRP6 complex that triggers beta-catenin signaling through inducing aggregation of receptor-ligand complexes into ribosome-sized signalosomes. The beta-catenin canonical signaling pathway leads to the activation of disheveled proteins, inhibition of GSK-3 kinase, nuclear accumulation of beta-catenin and activation of Wnt target genes. A second signaling pathway involving PKC and calcium fluxes has been seen for some family members, but it is not yet clear if it represents a distinct pathway or if it can be integrated in the canonical pathway, as PKC seems to be required for Wnt-mediated inactivation of GSK-3 kinase. Both pathways seem to involve interactions with G-proteins. May be involved in transduction and intercellular transmission of polarity information during tissue morphogenesis and/or in differentiated tissues. Coreceptor along with RYK of Wnt proteins, such as WNT1. This chain is Frizzled-8 (Fzd8), found in Rattus norvegicus (Rat).